The primary structure comprises 201 residues: Glycerol-3-phosphate acyltransferase (201 aa).

A run of 6 helical transmembrane segments spans residues 10–30, 60–80, 86–106, 116–136, 139–159, and 166–186; these read MLIG…GLIL, LAAA…LIAA, AAIA…WIGF, LGVL…AWIV, LLTR…PIAL, and ALAA…RANI.

Belongs to the PlsY family. In terms of assembly, probably interacts with PlsX.

It is found in the cell inner membrane. It carries out the reaction an acyl phosphate + sn-glycerol 3-phosphate = a 1-acyl-sn-glycero-3-phosphate + phosphate. It functions in the pathway lipid metabolism; phospholipid metabolism. Catalyzes the transfer of an acyl group from acyl-phosphate (acyl-PO(4)) to glycerol-3-phosphate (G3P) to form lysophosphatidic acid (LPA). This enzyme utilizes acyl-phosphate as fatty acyl donor, but not acyl-CoA or acyl-ACP. In Brucella ovis (strain ATCC 25840 / 63/290 / NCTC 10512), this protein is Glycerol-3-phosphate acyltransferase.